Consider the following 188-residue polypeptide: dCTP deaminase (188 aa).

DCTP contacts are provided by residues 111–116 (KSTYAR), 135–137 (TLE), Gln-156, Tyr-170, and Gln-180. The active-site Proton donor/acceptor is the Glu-137.

The protein belongs to the dCTP deaminase family. As to quaternary structure, homotrimer.

The enzyme catalyses dCTP + H2O + H(+) = dUTP + NH4(+). It functions in the pathway pyrimidine metabolism; dUMP biosynthesis; dUMP from dCTP (dUTP route): step 1/2. Functionally, catalyzes the deamination of dCTP to dUTP. This is dCTP deaminase from Pseudomonas putida (strain GB-1).